The chain runs to 46 residues: Protein PsbN (46 aa).

A helical transmembrane segment spans residues 7–27 (ALSVALGVMAVVLGLTGFGVY).

It belongs to the PsbN family.

Its subcellular location is the cellular thylakoid membrane. Functionally, may play a role in photosystem I and II biogenesis. The chain is Protein PsbN from Synechococcus sp. (strain CC9902).